Reading from the N-terminus, the 592-residue chain is Protein kinase C zeta type (592 aa).

In terms of domain architecture, PB1 spans 15–98 (RVRLKAHYGG…EVLIIHVFPS (84 aa)). Residues 79-145 (AFRLACQGRD…KRFNRRAYCG (67 aa)) are interaction with SQSTM1. A Phorbol-ester/DAG-type zinc finger spans residues 130–180 (GHLFQAKRFNRRAYCGQCSERIWGLARQGYRCINCKLLVHKRCHVLVPLTC). Residues 252 to 518 (FDLIRVIGRG…FSDIKSHAFF (267 aa)) form the Protein kinase domain. Residues 258–266 (IGRGSYAKV) and lysine 281 contribute to the ATP site. Aspartate 376 functions as the Proton acceptor in the catalytic mechanism. Threonine 410 is subject to Phosphothreonine; by PDPK1 and PI3K. In terms of domain architecture, AGC-kinase C-terminal spans 519 to 590 (RSIDWDLLEK…INPLLLSAEE (72 aa)). Threonine 560 carries the phosphothreonine modification. Residue serine 591 is modified to Phosphoserine.

It belongs to the protein kinase superfamily. AGC Ser/Thr protein kinase family. PKC subfamily. In terms of assembly, interacts with PARD6A, PARD6B and PARD6G. Part of a complex with PARD3, PARD6A or PARD6B or PARD6G and CDC42 or RAC1. Interacts with ADAP1/CENTA1. Forms a ternary complex with SQSTM1 and KCNAB2. Forms another ternary complex with SQSTM1 and GABRR3. Forms a complex with SQSTM1 and MAP2K5. Interacts (via the protein kinase domain) with WWC1. Forms a tripartite complex with WWC1 and DDR1, but predominantly in the absence of collagen. Component of the Par polarity complex, composed of at least phosphorylated PRKCZ, PARD3 and TIAM1. Interacts with PDPK1 (via N-terminal region). Interacts with WDFY2 (via WD repeats 1-3). Interacts with VAMP2. Forms a complex with WDFY2 and VAMP2. Interacts with APPL1. Interacts with WWC1, WWC2 and WWC3. Post-translationally, CDH5 is required for its phosphorylation at Thr-410. Phosphorylated by protein kinase PDPK1; phosphorylation is inhibited by the apoptotic C-terminal cleavage product of PKN2. Phosphorylation at Thr-410 by PI3K activates the kinase. Isoform 1: In brain, expressed in hippocampus, neocortex and cerebellum (at protein level). Also expressed in lung, liver, kidney, testis and to a lesser extent in pancreas, intestine and skin (at protein level). Isoform 2: Specifically expressed in brain where it localizes to the hippocampus, neocortex and cerebellum (at protein level).

It localises to the cytoplasm. The protein localises to the endosome. The protein resides in the cell junction. Its subcellular location is the membrane. It catalyses the reaction L-seryl-[protein] + ATP = O-phospho-L-seryl-[protein] + ADP + H(+). The catalysed reaction is L-threonyl-[protein] + ATP = O-phospho-L-threonyl-[protein] + ADP + H(+). With respect to regulation, atypical PKCs (PRKCI and PRKCZ) exhibit an elevated basal enzymatic activity (that may be due to the interaction with SMG1 or SQSTM1) and are not regulated by diacylglycerol, phosphatidylserine, phorbol esters or calcium ions. Two specific sites, Thr-410 (activation loop of the kinase domain) and Thr-560 (turn motif), need to be phosphorylated for its full activation. Phosphatidylinositol 3,4,5-trisphosphate might be a physiological activator. Isoform 2: Constitutively active. Calcium- and diacylglycerol-independent serine/threonine-protein kinase that functions in phosphatidylinositol 3-kinase (PI3K) pathway and mitogen-activated protein (MAP) kinase cascade, and is involved in NF-kappa-B activation, mitogenic signaling, cell proliferation, cell polarity, inflammatory response and maintenance of long-term potentiation (LTP). Upon lipopolysaccharide (LPS) treatment in macrophages, or following mitogenic stimuli, functions downstream of PI3K to activate MAP2K1/MEK1-MAPK1/ERK2 signaling cascade independently of RAF1 activation. Required for insulin-dependent activation of AKT3, but may function as an adapter rather than a direct activator. Upon insulin treatment may act as a downstream effector of PI3K and contribute to the activation of translocation of the glucose transporter SLC2A4/GLUT4 and subsequent glucose transport in adipocytes. In EGF-induced cells, binds and activates MAP2K5/MEK5-MAPK7/ERK5 independently of its kinase activity and can activate JUN promoter through MEF2C. Through binding with SQSTM1/p62, functions in interleukin-1 signaling and activation of NF-kappa-B with the specific adapters RIPK1 and TRAF6. Participates in TNF-dependent transactivation of NF-kappa-B by phosphorylating and activating IKBKB kinase, which in turn leads to the degradation of NF-kappa-B inhibitors. In migrating astrocytes, forms a cytoplasmic complex with PARD6A and is recruited by CDC42 to function in the establishment of cell polarity along with the microtubule motor and dynein. In association with FEZ1, stimulates neuronal differentiation in PC12 cells. In the inflammatory response, is required for the T-helper 2 (Th2) differentiation process, including interleukin production, efficient activation of JAK1 and the subsequent phosphorylation and nuclear translocation of STAT6. May be involved in development of allergic airway inflammation (asthma), a process dependent on Th2 immune response. In the NF-kappa-B-mediated inflammatory response, can relieve SETD6-dependent repression of NF-kappa-B target genes by phosphorylating the RELA subunit at 'Ser-311'. Phosphorylates VAMP2 in vitro. Phosphorylates and activates LRRK1, which phosphorylates RAB proteins involved in intracellular trafficking. In terms of biological role, involved in late synaptic long term potentiation phase in CA1 hippocampal cells and long term memory maintenance. The chain is Protein kinase C zeta type (Prkcz) from Rattus norvegicus (Rat).